A 360-amino-acid polypeptide reads, in one-letter code: Heme A synthase (360 aa).

5 helical membrane passes run 13 to 33 (AVRW…LVGG), 99 to 119 (LLGR…LWRG), 129 to 149 (LWLL…MVAS), 160 to 180 (YRLA…VWTV), and 199 to 219 (SALL…VAGL). Histidine 263 provides a ligand contact to heme. The next 3 helical transmembrane spans lie at 265 to 282 (MTAY…FDAV), 292 to 312 (GALW…LTLL), and 315 to 335 (VPIG…TLAV). Histidine 323 serves as a coordination point for heme.

This sequence belongs to the COX15/CtaA family. Type 2 subfamily. In terms of assembly, interacts with CtaB. Heme b serves as cofactor.

It localises to the cell membrane. The catalysed reaction is Fe(II)-heme o + 2 A + H2O = Fe(II)-heme a + 2 AH2. It participates in porphyrin-containing compound metabolism; heme A biosynthesis; heme A from heme O: step 1/1. In terms of biological role, catalyzes the conversion of heme O to heme A by two successive hydroxylations of the methyl group at C8. The first hydroxylation forms heme I, the second hydroxylation results in an unstable dihydroxymethyl group, which spontaneously dehydrates, resulting in the formyl group of heme A. This Bradyrhizobium diazoefficiens (strain JCM 10833 / BCRC 13528 / IAM 13628 / NBRC 14792 / USDA 110) protein is Heme A synthase.